The sequence spans 625 residues: Chaperone protein HtpG (625 aa).

The segment at 1–332 (MSKKTNAPVQ…TEDLSLNVSR (332 aa)) is a; substrate-binding. The b stretch occupies residues 333–545 (EVVQSSPVMA…KDAMDSQMER (213 aa)). The tract at residues 546 to 625 (MMKMMQQEMP…ELIEAATLSR (80 aa)) is c.

Belongs to the heat shock protein 90 family. Homodimer.

It localises to the cytoplasm. Its function is as follows. Molecular chaperone. Has ATPase activity. The polypeptide is Chaperone protein HtpG (Chlorobium phaeovibrioides (strain DSM 265 / 1930) (Prosthecochloris vibrioformis (strain DSM 265))).